The primary structure comprises 211 residues: Histone H1t (211 aa).

Position 1 is an N-acetylalanine (A1). The segment covering 1–16 has biased composition (low complexity); the sequence is AETAPAAPADSVPASV. The interval 1–42 is disordered; sequence AETAPAAPADSVPASVEKPPAKKRGKKPVGLTGTSRKAPSAS. A compositionally biased stretch (polar residues) spans 32 to 42; sequence TGTSRKAPSAS. The region spanning 39 to 112 is the H15 domain; the sequence is PSASVSKLIT…GASGSFKLSK (74 aa). Residue R57 is modified to Citrulline. The tract at residues 101–211 is disordered; the sequence is GTGASGSFKL…TNPRKATNRK (111 aa). Basic residues predominate over residues 121-135; it reads GKVKKPAAAKTKKLV. S142 carries the post-translational modification Phosphoserine. A compositionally biased stretch (basic residues) spans 147-156; the sequence is KANKRAKKSR. T158 carries the post-translational modification Phosphothreonine. A phosphoserine mark is found at S166 and S181. Positions 176–189 are enriched in basic residues; sequence KQQRKSPAKARAAK.

Belongs to the histone H1/H5 family. In terms of processing, phosphorylated in early spermatids. Post-translationally, citrullination at Arg-57 (H1R54ci) by PADI4 takes place within the DNA-binding site of H1 and results in its displacement from chromatin and global chromatin decondensation, thereby promoting pluripotency and stem cell maintenance. As to expression, testis-specific.

It localises to the nucleus. The protein localises to the chromosome. Functionally, testis-specific histone H1 that forms less compacted chromatin compared to other H1 histone subtypes. Formation of more relaxed chromatin may be required to promote chromatin architecture required for proper chromosome regulation during meiosis, such as homologous recombination. Histones H1 act as linkers that bind to nucleosomes and compact polynucleosomes into a higher-order chromatin configuration. The chain is Histone H1t from Sus scrofa (Pig).